A 273-amino-acid chain; its full sequence is Dermonecrotic toxin LdSicTox-alphaIB1bi (273 aa).

Residue H5 is part of the active site. E25 and D27 together coordinate Mg(2+). The active-site Nucleophile is the H41. Intrachain disulfides connect C45-C51 and C47-C190. D85 contributes to the Mg(2+) binding site. A glycan (N-linked (GlcNAc...) asparagine) is linked at N250.

The protein belongs to the arthropod phospholipase D family. Class II subfamily. The cofactor is Mg(2+). As to expression, expressed by the venom gland.

The protein resides in the secreted. It carries out the reaction an N-(acyl)-sphingosylphosphocholine = an N-(acyl)-sphingosyl-1,3-cyclic phosphate + choline. The catalysed reaction is an N-(acyl)-sphingosylphosphoethanolamine = an N-(acyl)-sphingosyl-1,3-cyclic phosphate + ethanolamine. It catalyses the reaction a 1-acyl-sn-glycero-3-phosphocholine = a 1-acyl-sn-glycero-2,3-cyclic phosphate + choline. The enzyme catalyses a 1-acyl-sn-glycero-3-phosphoethanolamine = a 1-acyl-sn-glycero-2,3-cyclic phosphate + ethanolamine. Dermonecrotic toxins cleave the phosphodiester linkage between the phosphate and headgroup of certain phospholipids (sphingolipid and lysolipid substrates), forming an alcohol (often choline) and a cyclic phosphate. This toxin acts on sphingomyelin (SM). It may also act on ceramide phosphoethanolamine (CPE), lysophosphatidylcholine (LPC) and lysophosphatidylethanolamine (LPE), but not on lysophosphatidylserine (LPS), and lysophosphatidylglycerol (LPG). It acts by transphosphatidylation, releasing exclusively cyclic phosphate products as second products. Induces dermonecrosis, hemolysis, increased vascular permeability, edema, inflammatory response, and platelet aggregation. The chain is Dermonecrotic toxin LdSicTox-alphaIB1bi from Loxosceles deserta (Desert recluse spider).